The sequence spans 212 residues: Imidazole glycerol phosphate synthase subunit HisH (212 aa).

The 206-residue stretch at 3–208 (RIVIVDYGMG…GRMVCDLIST (206 aa)) folds into the Glutamine amidotransferase type-1 domain. The active-site Nucleophile is C81. Residues H183 and E185 contribute to the active site.

As to quaternary structure, heterodimer of HisH and HisF.

The protein localises to the cytoplasm. It catalyses the reaction 5-[(5-phospho-1-deoxy-D-ribulos-1-ylimino)methylamino]-1-(5-phospho-beta-D-ribosyl)imidazole-4-carboxamide + L-glutamine = D-erythro-1-(imidazol-4-yl)glycerol 3-phosphate + 5-amino-1-(5-phospho-beta-D-ribosyl)imidazole-4-carboxamide + L-glutamate + H(+). The catalysed reaction is L-glutamine + H2O = L-glutamate + NH4(+). It functions in the pathway amino-acid biosynthesis; L-histidine biosynthesis; L-histidine from 5-phospho-alpha-D-ribose 1-diphosphate: step 5/9. IGPS catalyzes the conversion of PRFAR and glutamine to IGP, AICAR and glutamate. The HisH subunit catalyzes the hydrolysis of glutamine to glutamate and ammonia as part of the synthesis of IGP and AICAR. The resulting ammonia molecule is channeled to the active site of HisF. The sequence is that of Imidazole glycerol phosphate synthase subunit HisH from Symbiobacterium thermophilum (strain DSM 24528 / JCM 14929 / IAM 14863 / T).